Reading from the N-terminus, the 531-residue chain is O-phosphoserine--tRNA(Cys) ligase (531 aa).

Substrate contacts are provided by residues 189–191, 234–236, 276–277, and Asn-319; these read HMT, SAS, and YY.

Belongs to the class-II aminoacyl-tRNA synthetase family. O-phosphoseryl-tRNA(Cys) synthetase subfamily. In terms of assembly, homotetramer. Interacts with SepCysS.

The catalysed reaction is tRNA(Cys) + O-phospho-L-serine + ATP = O-phospho-L-seryl-tRNA(Cys) + AMP + diphosphate. Catalyzes the attachment of O-phosphoserine (Sep) to tRNA(Cys). The polypeptide is O-phosphoserine--tRNA(Cys) ligase (Methanoculleus marisnigri (strain ATCC 35101 / DSM 1498 / JR1)).